We begin with the raw amino-acid sequence, 360 residues long: Probable neutral protease 2 homolog A (360 aa).

Residues 1–17 form the signal peptide; that stretch reads MQFTALLAALGAPLALA. Positions 18-183 are excised as a propeptide; it reads ASIPAAAHNH…DDSTGVIDKR (166 aa). 3 disulfides stabilise this stretch: Cys191–Cys262, Cys269–Cys287, and Cys300–Cys360. N-linked (GlcNAc...) asparagine glycosylation occurs at Asn205. Position 311 (His311) interacts with Zn(2+). Glu312 is an active-site residue. Zn(2+) is bound by residues His315 and Asp326.

Belongs to the peptidase M35 family. The cofactor is Zn(2+).

It localises to the secreted. The catalysed reaction is Preferential cleavage of bonds with hydrophobic residues in P1'. Also 3-Asn-|-Gln-4 and 8-Gly-|-Ser-9 bonds in insulin B chain.. Functionally, probable secreted metalloprotease that shows high activities on basic nuclear substrates such as histone and protamine. May be involved in virulence. The protein is Probable neutral protease 2 homolog A (NpII-A) of Trichophyton rubrum (Athlete's foot fungus).